A 283-amino-acid chain; its full sequence is Thymidylate synthase (283 aa).

Residue R22 coordinates dUMP. Residue C160 is the Nucleophile of the active site. DUMP-binding positions include 180 to 183 (RSCD), N191, and 221 to 223 (HIY). D183 provides a ligand contact to (6R)-5,10-methylene-5,6,7,8-tetrahydrofolate. Residue A282 participates in (6R)-5,10-methylene-5,6,7,8-tetrahydrofolate binding.

The protein belongs to the thymidylate synthase family. Bacterial-type ThyA subfamily. Homodimer.

It localises to the cytoplasm. The catalysed reaction is dUMP + (6R)-5,10-methylene-5,6,7,8-tetrahydrofolate = 7,8-dihydrofolate + dTMP. The protein operates within pyrimidine metabolism; dTTP biosynthesis. Catalyzes the reductive methylation of 2'-deoxyuridine-5'-monophosphate (dUMP) to 2'-deoxythymidine-5'-monophosphate (dTMP) while utilizing 5,10-methylenetetrahydrofolate (mTHF) as the methyl donor and reductant in the reaction, yielding dihydrofolate (DHF) as a by-product. This enzymatic reaction provides an intracellular de novo source of dTMP, an essential precursor for DNA biosynthesis. The polypeptide is Thymidylate synthase (Colwellia psychrerythraea (strain 34H / ATCC BAA-681) (Vibrio psychroerythus)).